Here is a 211-residue protein sequence, read N- to C-terminus: uncharacterized protein (211 aa).

This is an uncharacterized protein from Homo sapiens (Human).